The chain runs to 179 residues: Putative invertase inhibitor (179 aa).

The first 23 residues, 1 to 23 (MKLSFSLCIFFFNLLLLLQAVIS), serve as a signal peptide directing secretion. Intrachain disulfides connect C31–C46 and C102–C142.

This sequence belongs to the PMEI family. As to quaternary structure, monomer. In terms of processing, not glycosylated. In terms of tissue distribution, expressed in pollen (at protein level). Expressed in stem, but not leaves (at protein level). Expressed in pollen.

Its subcellular location is the secreted. The protein localises to the cell wall. The protein resides in the endoplasmic reticulum. Its function is as follows. Invertase inhibitor. In Platanus acerifolia (London plane tree), this protein is Putative invertase inhibitor.